A 1309-amino-acid polypeptide reads, in one-letter code: Nuclear pore complex protein NUP1 (1309 aa).

Disordered stretches follow at residues 1–58 (MASA…GGGW), 83–118 (RKRLGSGETPLQSPEQQKQLPERGVNQETKVGHKED), 173–210 (AADSSTMNEEQRNEVGMVVRHPPSHERDRTHPDNGSMN), 266–296 (RTPFPQKSPTMSLVTKPSGQRPLENGFVTPR), 329–348 (SKWEESLPSGSRQGFQSGLK), 384–417 (ESPLSVRANGGEKTTHTSKDSAEDIPGSSFNLVP), 467–538 (LGNL…EEHP), 594–617 (SEAMPSTSYISNGDASQGTSNGSL), and 635–680 (SNMA…VFPN). The tract at residues 2 to 677 (ASAARGESSN…LEEPKKPAAV (676 aa)) is 25 X 2 AA repeats of F-G. Residues 22-32 (KFRKPTARRSQ) are compositionally biased toward basic residues. Residues 47–58 (GLGGGDVRGGGW) are compositionally biased toward gly residues. Residues 91-101 (TPLQSPEQQKQ) are compositionally biased toward polar residues. Positions 195–204 (PSHERDRTHP) are enriched in basic and acidic residues. Residues 268–283 (PFPQKSPTMSLVTKPS) are compositionally biased toward polar residues. Over residues 396–405 (KTTHTSKDSA) the composition is skewed to basic and acidic residues. 2 stretches are compositionally biased toward polar residues: residues 597-617 (MPSTSYISNGDASQGTSNGSL) and 635-659 (SNMASEPTSKFIQGTEKSSISSGKP). Residues 660–673 (TSEEKRIPLEEPKK) are compositionally biased toward basic and acidic residues. Residues 711–712 (FG) form repeat 1. A disordered region spans residues 719-865 (KPTESKKTFS…VKNATFGNTS (147 aa)). 2 stretches are compositionally biased toward low complexity: residues 728 to 741 (SNSASGAESSTSAA) and 767 to 783 (SSPSFPPSISNIPSDNS). Positions 789-803 (STVQSFAATHNSSSI) are enriched in polar residues. Repeat unit 2 spans residues 804 to 805 (FG). Positions 809–827 (TSNDSNSQSTSASPLSSTS) are enriched in low complexity. 12 tandem repeats follow at residues 831–832 (FG), 861–862 (FG), 869–870 (FG), 883–884 (FG), 898–899 (FG), 927–928 (FG), 956–957 (FG), 983–984 (FG), 1004–1005 (FG), 1029–1030 (FG), 1038–1039 (FG), and 1053–1054 (FG). Residues 1004 to 1023 (FGAGNAQTGNTGSGTTTSTQ) show a composition bias toward low complexity. The tract at residues 1004–1028 (FGAGNAQTGNTGSGTTTSTQSIPFQ) is disordered. Low complexity predominate over residues 1068–1086 (TPQLSSTNSSASSSSTMSS). Positions 1068–1105 (TPQLSSTNSSASSSSTMSSPLFGTSWQAPNSSPNSGPV) are disordered. Repeat unit 15 spans residues 1089–1090 (FG). Residues 1096–1105 (PNSSPNSGPV) show a composition bias toward low complexity. 10 repeat units span residues 1121-1122 (FG), 1137-1138 (FG), 1151-1152 (FG), 1153-1154 (FG), 1166-1167 (FG), 1177-1178 (FG), 1186-1187 (FG), 1224-1225 (FG), 1238-1239 (FG), and 1255-1256 (FG). A disordered region spans residues 1278-1309 (FQGGGSFSLGSTGGGDKSGRRIFKAKKSTRKK). Residues 1279–1293 (QGGGSFSLGSTGGGD) are compositionally biased toward gly residues. The span at 1297–1309 (RRIFKAKKSTRKK) shows a compositional bias: basic residues.

As to quaternary structure, part of the nuclear pore complex (NPC). The NPC has an eight-fold symmetrical structure comprising a central transport channel and two rings, the cytoplasmic and nuclear rings, to which eight filaments are attached. The cytoplasmic filaments have loose ends, while the nuclear filaments are joined in a distal ring, forming a nuclear basket. NPCs are highly dynamic in configuration and composition, and can be devided in 3 subcomplexes, the NUP62 subcomplex, the NUP107-160 subcomplex and the NUP93 subcomplex, containing approximately 30 different nucleoporin proteins. Interacts with EER5, anchoring the TREX-2 complex on the nuclear pore complex. Interacts with UCH1 and UCH2.

The protein localises to the nucleus envelope. The protein resides in the nucleus. Its subcellular location is the nuclear pore complex. It localises to the cytoplasm. It is found in the cytosol. Functionally, nucleoporin required for nuclear mRNA export. Functions as an adapter and/or regulator molecule in the periphery of the nuclear pore complex (NPC). May interact with importin proteins and mediate active nucleocytoplasmic transport through the NPC. Involved in regulation of nuclear morphology. This is Nuclear pore complex protein NUP1 from Arabidopsis thaliana (Mouse-ear cress).